The primary structure comprises 174 residues: Superoxide dismutase [Cu-Zn] (174 aa).

The N-terminal stretch at Met-1 to Ala-23 is a signal peptide. Cu cation contacts are provided by His-68, His-70, and His-86. Cys-75 and Cys-170 form a disulfide bridge. The Zn(2+) site is built by His-86, His-95, Asp-104, and Asp-107. Residue His-150 coordinates Cu cation.

This sequence belongs to the Cu-Zn superoxide dismutase family. As to quaternary structure, homodimer. It depends on Cu cation as a cofactor. Requires Zn(2+) as cofactor.

The protein resides in the periplasm. The enzyme catalyses 2 superoxide + 2 H(+) = H2O2 + O2. Its function is as follows. Destroys radicals which are normally produced within the cells and which are toxic to biological systems. May function against extracytoplasmic toxic oxygen species. The sequence is that of Superoxide dismutase [Cu-Zn] (sodC) from Caulobacter vibrioides (strain ATCC 19089 / CIP 103742 / CB 15) (Caulobacter crescentus).